Consider the following 457-residue polypeptide: Bifunctional protein GlmU (457 aa).

Residues 1–229 (MSNSAKSVVI…LSEMEGVNNR (229 aa)) are pyrophosphorylase. UDP-N-acetyl-alpha-D-glucosamine-binding positions include 11–14 (LAAG), Lys25, Gln76, 81–82 (GT), 103–105 (YGD), Gly140, Glu154, Asn169, and Asn227. Asp105 provides a ligand contact to Mg(2+). Asn227 contributes to the Mg(2+) binding site. A linker region spans residues 230-250 (LQLSALERIYQSEQAEQLLLA). Positions 251–457 (GVMLLDPARF…GWKRPVKEKK (207 aa)) are N-acetyltransferase. UDP-N-acetyl-alpha-D-glucosamine is bound by residues Arg333 and Lys351. Residue His363 is the Proton acceptor of the active site. 2 residues coordinate UDP-N-acetyl-alpha-D-glucosamine: Tyr366 and Asn377. Residues Ala380, 386 to 387 (NY), Ser405, Ala423, and Arg440 contribute to the acetyl-CoA site.

The protein in the N-terminal section; belongs to the N-acetylglucosamine-1-phosphate uridyltransferase family. It in the C-terminal section; belongs to the transferase hexapeptide repeat family. Homotrimer. It depends on Mg(2+) as a cofactor.

The protein localises to the cytoplasm. It catalyses the reaction alpha-D-glucosamine 1-phosphate + acetyl-CoA = N-acetyl-alpha-D-glucosamine 1-phosphate + CoA + H(+). The enzyme catalyses N-acetyl-alpha-D-glucosamine 1-phosphate + UTP + H(+) = UDP-N-acetyl-alpha-D-glucosamine + diphosphate. It functions in the pathway nucleotide-sugar biosynthesis; UDP-N-acetyl-alpha-D-glucosamine biosynthesis; N-acetyl-alpha-D-glucosamine 1-phosphate from alpha-D-glucosamine 6-phosphate (route II): step 2/2. Its pathway is nucleotide-sugar biosynthesis; UDP-N-acetyl-alpha-D-glucosamine biosynthesis; UDP-N-acetyl-alpha-D-glucosamine from N-acetyl-alpha-D-glucosamine 1-phosphate: step 1/1. The protein operates within bacterial outer membrane biogenesis; LPS lipid A biosynthesis. Functionally, catalyzes the last two sequential reactions in the de novo biosynthetic pathway for UDP-N-acetylglucosamine (UDP-GlcNAc). The C-terminal domain catalyzes the transfer of acetyl group from acetyl coenzyme A to glucosamine-1-phosphate (GlcN-1-P) to produce N-acetylglucosamine-1-phosphate (GlcNAc-1-P), which is converted into UDP-GlcNAc by the transfer of uridine 5-monophosphate (from uridine 5-triphosphate), a reaction catalyzed by the N-terminal domain. The chain is Bifunctional protein GlmU from Photorhabdus laumondii subsp. laumondii (strain DSM 15139 / CIP 105565 / TT01) (Photorhabdus luminescens subsp. laumondii).